We begin with the raw amino-acid sequence, 464 residues long: Ribosomal protein uS12 methylthiotransferase RimO (464 aa).

The MTTase N-terminal domain maps to 14–125 (PTVAFAHLGC…IVEVLQRVEA (112 aa)). 6 residues coordinate [4Fe-4S] cluster: Cys23, Cys59, Cys88, Cys163, Cys167, and Cys170. In terms of domain architecture, Radical SAM core spans 149-378 (TTDQAVAFLK…MALQQPISAE (230 aa)). In terms of domain architecture, TRAM spans 381 to 452 (HSWVSRTVDV…VYDLSGRIVG (72 aa)).

This sequence belongs to the methylthiotransferase family. RimO subfamily. [4Fe-4S] cluster serves as cofactor.

Its subcellular location is the cytoplasm. It carries out the reaction L-aspartate(89)-[ribosomal protein uS12]-hydrogen + (sulfur carrier)-SH + AH2 + 2 S-adenosyl-L-methionine = 3-methylsulfanyl-L-aspartate(89)-[ribosomal protein uS12]-hydrogen + (sulfur carrier)-H + 5'-deoxyadenosine + L-methionine + A + S-adenosyl-L-homocysteine + 2 H(+). Its function is as follows. Catalyzes the methylthiolation of an aspartic acid residue of ribosomal protein uS12. The polypeptide is Ribosomal protein uS12 methylthiotransferase RimO (Parasynechococcus marenigrum (strain WH8102)).